We begin with the raw amino-acid sequence, 151 residues long: tRNA-specific adenosine deaminase (151 aa).

One can recognise a CMP/dCMP-type deaminase domain in the interval 4-122 (NRDSYWMKIA…PFLKKIFINL (119 aa)). A Zn(2+)-binding site is contributed by H55. Catalysis depends on E57, which acts as the Proton donor. Zn(2+) is bound by residues C85 and C88.

Belongs to the cytidine and deoxycytidylate deaminase family. Homodimer. Zn(2+) serves as cofactor.

The catalysed reaction is adenosine(34) in tRNA + H2O + H(+) = inosine(34) in tRNA + NH4(+). In terms of biological role, catalyzes the deamination of adenosine to inosine at the wobble position 34 of tRNA(Arg2). This Buchnera aphidicola subsp. Schizaphis graminum (strain Sg) protein is tRNA-specific adenosine deaminase.